We begin with the raw amino-acid sequence, 100 residues long: Co-chaperonin GroES (100 aa).

It belongs to the GroES chaperonin family. In terms of assembly, heptamer of 7 subunits arranged in a ring. Interacts with the chaperonin GroEL.

Its subcellular location is the cytoplasm. In terms of biological role, together with the chaperonin GroEL, plays an essential role in assisting protein folding. The GroEL-GroES system forms a nano-cage that allows encapsulation of the non-native substrate proteins and provides a physical environment optimized to promote and accelerate protein folding. GroES binds to the apical surface of the GroEL ring, thereby capping the opening of the GroEL channel. This chain is Co-chaperonin GroES, found in Mycolicibacterium paratuberculosis (strain ATCC BAA-968 / K-10) (Mycobacterium paratuberculosis).